Here is a 709-residue protein sequence, read N- to C-terminus: Heme/hemopexin utilization protein C (709 aa).

The signal sequence occupies residues 1 to 21 (MRFSKLSLAITTTLVTANALA). The region spanning 36-147 (DPSRFTYTPQ…LGGVVAMRTP (112 aa)) is the TBDR plug domain. Residues 158-709 (KFGVKIRQGY…NAKISAVYSF (552 aa)) enclose the TBDR beta-barrel domain. A TonB C-terminal box motif is present at residues 692 to 709 (SLMEGTGRNAKISAVYSF).

This sequence belongs to the TonB-dependent receptor family.

Its subcellular location is the cell outer membrane. Functionally, required for utilization of free heme at low concentrations. The polypeptide is Heme/hemopexin utilization protein C (hxuC) (Haemophilus influenzae (strain 86-028NP)).